Consider the following 1019-residue polypeptide: Probable inorganic carbon transporter subunit DabA 1 (1019 aa).

Cysteine 491 and aspartate 493 together coordinate Zn(2+). Positions 624 to 643 are disordered; that stretch reads VPTRLHSPRDEGSAAGGEGQ. Positions 676 and 691 each coordinate Zn(2+).

The protein belongs to the inorganic carbon transporter (TC 9.A.2) DabA family. As to quaternary structure, forms a complex with DabB. The cofactor is Zn(2+).

Its subcellular location is the cell inner membrane. Its function is as follows. Part of an energy-coupled inorganic carbon pump. This Sorangium cellulosum (strain So ce56) (Polyangium cellulosum (strain So ce56)) protein is Probable inorganic carbon transporter subunit DabA 1.